A 224-amino-acid chain; its full sequence is ATP synthase subunit a (224 aa).

A run of 6 helical transmembrane segments spans residues leucine 17–leucine 37, isoleucine 72–isoleucine 92, leucine 99–isoleucine 119, methionine 125–isoleucine 145, leucine 170–leucine 190, and isoleucine 195–leucine 215.

It belongs to the ATPase A chain family. As to quaternary structure, F-type ATPases have 2 components, CF(1) - the catalytic core - and CF(0) - the membrane proton channel. CF(1) has five subunits: alpha(3), beta(3), gamma(1), delta(1), epsilon(1). CF(0) has three main subunits: a, b and c.

Its subcellular location is the mitochondrion inner membrane. Its function is as follows. Mitochondrial membrane ATP synthase (F(1)F(0) ATP synthase or Complex V) produces ATP from ADP in the presence of a proton gradient across the membrane which is generated by electron transport complexes of the respiratory chain. F-type ATPases consist of two structural domains, F(1) - containing the extramembraneous catalytic core and F(0) - containing the membrane proton channel, linked together by a central stalk and a peripheral stalk. During catalysis, ATP synthesis in the catalytic domain of F(1) is coupled via a rotary mechanism of the central stalk subunits to proton translocation. Key component of the proton channel; it may play a direct role in the translocation of protons across the membrane. This chain is ATP synthase subunit a (mt:ATPase6), found in Drosophila mauritiana (Fruit fly).